The following is a 214-amino-acid chain: GTP-binding nuclear protein Ran (214 aa).

One can recognise a Small GTPase Ran-type domain in the interval 6–170 (YIPQYKLILV…LWLARRLSNQ (165 aa)). 17 to 24 (DGGVGKTT) contributes to the GTP binding site. The switch-I stretch occupies residues 36-44 (KKYIPTLGV). Residues Gly67, 121-124 (NKVD), and 149-151 (SAR) contribute to the GTP site. Residues 67 to 83 (GQEKFGGLRDGYYIKSD) form a switch-II region.

The protein belongs to the small GTPase superfamily. Ran family. As to quaternary structure, found in a nuclear export complex with RanGTP, exportin and pre-miRNA.

The protein localises to the nucleus. Functionally, GTP-binding protein involved in nucleocytoplasmic transport. Required for the import of protein into the nucleus and also for RNA export. Involved in chromatin condensation and control of cell cycle. This Plasmodium falciparum protein is GTP-binding nuclear protein Ran.